A 1178-amino-acid chain; its full sequence is Zinc finger CCHC domain-containing protein 2 (1178 aa).

Disordered regions lie at residues 1–90, 207–249, 557–683, and 936–986; these read MLRM…GPSA, AARG…RVGG, VTSA…SVNQ, and LSTA…SDST. The segment covering 43 to 67 has biased composition (pro residues); that stretch reads PPPPPPPPAGPSRGPLPPPPPPRGL. Positions 75–88 are enriched in gly residues; it reads AAAGAGMPGGGGGP. A compositionally biased stretch (basic and acidic residues) spans 208–219; sequence ARGEGSRGGAED. Residues 220–229 are compositionally biased toward acidic residues; that stretch reads ERGEDGDGEQ. A Phosphoserine modification is found at Ser-236. The span at 580–594 shows a compositional bias: basic and acidic residues; sequence PQTEKEKIKKTDNRL. Over residues 595-607 the composition is skewed to polar residues; that stretch reads NSRINGIRLSTPQ. Over residues 632–641 the composition is skewed to low complexity; sequence SSESYSSPSS. Positions 642–661 are enriched in basic and acidic residues; sequence PRHDGRESFESEEEKDRDTD. Residues 665–683 show a composition bias toward polar residues; sequence EDSGNPSTTRFTGYGSVNQ. A compositionally biased stretch (low complexity) spans 937 to 948; sequence STAATSPQPASA. Residues 959-973 are compositionally biased toward pro residues; sequence PAVPTHTPGPAPSPS. Positions 974–986 are enriched in polar residues; it reads PALTHSTAQSDST. Residues 1131–1148 form a CCHC-type zinc finger; it reads VSCYNCGVSGHYAQDCKQ.

The chain is Zinc finger CCHC domain-containing protein 2 from Homo sapiens (Human).